A 1381-amino-acid polypeptide reads, in one-letter code: Peroxisomal ATPase PEX6 (1381 aa).

The span at 1 to 10 shows a compositional bias: polar residues; that stretch reads MTAPNSTPAS. Disordered stretches follow at residues 1 to 23, 247 to 315, 333 to 374, and 467 to 499; these read MTAPNSTPASSRKRVRRRRQDKP, VRTS…DNLS, TVTG…DRPR, and YSSRSATRSHHSRHDSRNSSFFEAQSQKSNPPA. Over residues 11–20 the composition is skewed to basic residues; the sequence is SRKRVRRRRQ. Acidic residues-rich tracts occupy residues 270 to 284 and 296 to 315; these read AEDDEDAYFSAAEED and TDADDTEFEPQAGEDEDNLS. Polar residues-rich tracts occupy residues 333–345, 355–367, and 487–499; these read TVTGQSTIGTGTP, GPGSVISSYTATT, and FFEAQSQKSNPPA. 1031–1038 contributes to the ATP binding site; sequence GPPGTGKT. Basic and acidic residues-rich tracts occupy residues 1294 to 1305 and 1337 to 1350; these read GAKDKDKKKEGA and STKKDGKGKGKAAD. The interval 1294–1381 is disordered; that stretch reads GAKDKDKKKE…GGDEDEGLYD (88 aa). Residues 1372 to 1381 are compositionally biased toward acidic residues; the sequence is GGDEDEGLYD.

Belongs to the AAA ATPase family. In terms of assembly, interacts with PEX1; forming the PEX1-PEX6 AAA ATPase complex, which is composed of a heterohexamer formed by a trimer of PEX1-PEX6 dimers.

Its subcellular location is the cytoplasm. It is found in the cytosol. The protein resides in the peroxisome membrane. The catalysed reaction is ATP + H2O = ADP + phosphate + H(+). Component of the PEX1-PEX6 AAA ATPase complex, a protein dislocase complex that mediates the ATP-dependent extraction of the PEX5 receptor from peroxisomal membranes, an essential step for PEX5 recycling. Specifically recognizes PEX5 monoubiquitinated at 'Cys-6', and pulls it out of the peroxisome lumen through the PEX2-PEX10-PEX12 retrotranslocation channel. Extraction by the PEX1-PEX6 AAA ATPase complex is accompanied by unfolding of the TPR repeats and release of bound cargo from PEX5. In Neurospora crassa (strain ATCC 24698 / 74-OR23-1A / CBS 708.71 / DSM 1257 / FGSC 987), this protein is Peroxisomal ATPase PEX6 (pex-6).